A 700-amino-acid chain; its full sequence is Beta-galactosidase BgaB (700 aa).

2 residues coordinate substrate: arginine 122 and asparagine 160. Glutamate 161 functions as the Proton donor in the catalytic mechanism. Glutamate 320 functions as the Nucleophile in the catalytic mechanism. Substrate-binding positions include tryptophan 328 and 368–371 (EAFH).

The protein belongs to the glycosyl hydrolase 42 family. As to quaternary structure, trimer. Tetramer. The N-terminus is blocked.

The enzyme catalyses Hydrolysis of terminal non-reducing beta-D-galactose residues in beta-D-galactosides.. Inhibited by high substrate concentrations (100 mg/ml). No effect on activity with various EDTA concentrations (0-1 mM). 20-fold higher activity when cells grown on TOS than when cells grown on galactose, glucose and lactose. In terms of biological role, involved in the hydrolysis of transgalactooligosaccharides (TOS). Highly active towards Gal(beta1-4)Gal and Gal(beta1-4)-Gal-containing oligosaccharides. Low activity towards Gal(beta1-3)Gal, lactose and Gal(beta1-3)GalOMe. No activity towards Gal(beta1-6)Gal, Gal(beta1-4)Man, Gal(alpha1-4)Gal, Gal(alpha1-3)Gal(beta1-4)Gal, lactulose, 3'fucosyllactose, lacto-N-fucopentaose I, lacto-N-fucopentaose II, cellobiose, maltose or sucrose. No transglycosylation activity is found at high substrate concentrations (100 mg/ml) and only low transglycosylation activity at lower substrate concentrations (10 mg/ml). The chain is Beta-galactosidase BgaB (bgaB) from Bifidobacterium adolescentis (strain ATCC 15703 / DSM 20083 / NCTC 11814 / E194a).